The primary structure comprises 353 residues: Thrombopoietin (353 aa).

Positions 1–21 are cleaved as a signal peptide; it reads MELTELLLVVMLLLTARLTLS. O-linked (GalNAc...) serine glycosylation occurs at Ser-22. 2 cysteine pairs are disulfide-bonded: Cys-28-Cys-172 and Cys-50-Cys-106. 4 O-linked (GalNAc...) threonine glycosylation sites follow: Thr-58, Thr-131, Thr-179, and Thr-180. Residue Ser-184 is glycosylated (O-linked (GalNAc...) serine). Residues Asn-197 and Asn-206 are each glycosylated (N-linked (GlcNAc...) (complex) asparagine). A glycan (O-linked (GalNAc...) threonine) is linked at Thr-213. N-linked (GlcNAc...) (complex) asparagine glycans are attached at residues Asn-234 and Asn-255. Residues 257–353 are disordered; that stretch reads TRGLFPGPSR…THSQNLSQEG (97 aa). Residue Ser-265 is glycosylated (O-linked (GalNAc...) serine). Positions 275-304 are enriched in polar residues; that stretch reads SSGTSDTGSLPPNLQPGYSPSPTHPPTGQY. Pro residues predominate over residues 324–335; the sequence is LPDPSAPTPTPT. 2 N-linked (GlcNAc...) asparagine glycosylation sites follow: Asn-340 and Asn-348. Residues 343 to 353 show a composition bias toward polar residues; the sequence is YTHSQNLSQEG.

Belongs to the EPO/TPO family. Interacts with MPL/TPOR.

The protein localises to the secreted. Lineage-specific cytokine affecting the proliferation and maturation of megakaryocytes from their committed progenitor cells. It acts at a late stage of megakaryocyte development. It may be the major physiological regulator of circulating platelets. This chain is Thrombopoietin (THPO), found in Homo sapiens (Human).